The sequence spans 201 residues: Ran-specific GTPase-activating protein 1 (201 aa).

Composition is skewed to basic and acidic residues over residues methionine 1 to alanine 17 and lysine 32 to glutamate 66. The disordered stretch occupies residues methionine 1–glutamate 66. At serine 60 the chain carries Phosphoserine. Positions histidine 64–lysine 200 constitute a RanBD1 domain.

Belongs to the RANBP1 family. Interacts with GSP1 and PRP20.

It is found in the cytoplasm. The protein resides in the nucleus. In terms of biological role, important for the export of protein containing nuclear export signal (NES) out of the nucleus. Stimulates the GTPase activity of GSP1 and GSP2. This is Ran-specific GTPase-activating protein 1 (YRB1) from Saccharomyces cerevisiae (strain ATCC 204508 / S288c) (Baker's yeast).